Reading from the N-terminus, the 253-residue chain is Trypsin delta (253 aa).

A signal peptide spans 1 to 22 (MLKFVILLSAVACALGGTVPEG). Positions 23–30 (LLPQLDGR) are cleaved as a propeptide — activation peptide. The Peptidase S1 domain occupies 31–253 (IVGGSATTIS…ALRSWVISNA (223 aa)). Cysteine 56 and cysteine 72 are joined by a disulfide. Catalysis depends on charge relay system residues histidine 71 and aspartate 116. Intrachain disulfides connect cysteine 180–cysteine 197 and cysteine 206–cysteine 230. Serine 210 functions as the Charge relay system in the catalytic mechanism.

Belongs to the peptidase S1 family.

The protein resides in the secreted. It is found in the extracellular space. The catalysed reaction is Preferential cleavage: Arg-|-Xaa, Lys-|-Xaa.. The chain is Trypsin delta from Drosophila melanogaster (Fruit fly).